Reading from the N-terminus, the 291-residue chain is 4-hydroxy-tetrahydrodipicolinate synthase (291 aa).

A pyruvate-binding site is contributed by threonine 44. The active-site Proton donor/acceptor is the tyrosine 132. Lysine 160 serves as the catalytic Schiff-base intermediate with substrate. Residue valine 202 coordinates pyruvate.

It belongs to the DapA family. Homotetramer; dimer of dimers.

It localises to the cytoplasm. It catalyses the reaction L-aspartate 4-semialdehyde + pyruvate = (2S,4S)-4-hydroxy-2,3,4,5-tetrahydrodipicolinate + H2O + H(+). It functions in the pathway amino-acid biosynthesis; L-lysine biosynthesis via DAP pathway; (S)-tetrahydrodipicolinate from L-aspartate: step 3/4. In terms of biological role, catalyzes the condensation of (S)-aspartate-beta-semialdehyde [(S)-ASA] and pyruvate to 4-hydroxy-tetrahydrodipicolinate (HTPA). This is 4-hydroxy-tetrahydrodipicolinate synthase from Clostridium perfringens (strain SM101 / Type A).